A 377-amino-acid chain; its full sequence is MACNQALIHLANLRHNLGEIMSRTRARVCLPVKADAYGHGACDVAQAALSCGVHSFAVACVQEASQLRAAGVRAPILCLSTPTAEEISSLIEHRVHTVISERAHIALIARALRQSADTGATCGVHVKIDTGMGRIGCAPDEACALVQMVCATPGLHLEGVCTHFSVADSVRAEDLQYTEMQRAHFMHCVQYIRKSGISIPLVHAANSAALLCHPRAHFDMVRPGLLAYGYAPESVHPAVRSVFLPVMELVTQVRAIKKIPAGAYVSYQRLWRAHTETHVGILPIGYADGVMRALSPGLQVCIGGKWYPVVGAICMDQCVVDLGTPLRVTVGDRVTLFGPQDAGGPGQGADVLASHAGTIPYELLCAIGKRVERVYIR.

Lys33 serves as the catalytic Proton acceptor; specific for D-alanine. An N6-(pyridoxal phosphate)lysine modification is found at Lys33. Arg134 is a substrate binding site. Tyr267 acts as the Proton acceptor; specific for L-alanine in catalysis. Met315 is a substrate binding site.

It belongs to the alanine racemase family. Pyridoxal 5'-phosphate is required as a cofactor.

The enzyme catalyses L-alanine = D-alanine. It functions in the pathway amino-acid biosynthesis; D-alanine biosynthesis; D-alanine from L-alanine: step 1/1. Its function is as follows. Catalyzes the interconversion of L-alanine and D-alanine. May also act on other amino acids. This Treponema pallidum subsp. pallidum (strain SS14) protein is Alanine racemase (alr).